The chain runs to 201 residues: Adenylyl-sulfate kinase (201 aa).

35–42 (GLSGSGKS) is a binding site for ATP. The active-site Phosphoserine intermediate is the Ser109.

This sequence belongs to the APS kinase family.

The enzyme catalyses adenosine 5'-phosphosulfate + ATP = 3'-phosphoadenylyl sulfate + ADP + H(+). Its pathway is sulfur metabolism; hydrogen sulfide biosynthesis; sulfite from sulfate: step 2/3. In terms of biological role, catalyzes the synthesis of activated sulfate. In Escherichia coli O139:H28 (strain E24377A / ETEC), this protein is Adenylyl-sulfate kinase.